Here is a 194-residue protein sequence, read N- to C-terminus: Histone H1.0 (194 aa).

Met-1 is subject to N-acetylmethionine. The span at Met-1–Ala-11 shows a compositional bias: low complexity. Residues Met-1–Ser-29 are disordered. Thr-2 is modified (N-acetylthreonine; in Histone H1.0, N-terminally processed). Residues Asp-24 to Lys-97 enclose the H15 domain. Arg-42 carries the citrulline modification. Residues Gln-83 to Lys-194 are disordered. Position 104 is an ADP-ribosylserine (Ser-104). Basic residues predominate over residues Val-105–Lys-194.

This sequence belongs to the histone H1/H5 family. Post-translationally, ADP-ribosylated on Ser-104 in response to DNA damage.

The protein resides in the nucleus. The protein localises to the chromosome. Histones H1 are necessary for the condensation of nucleosome chains into higher-order structures. The histones H1.0 are found in cells that are in terminal stages of differentiation or that have low rates of cell division. This is Histone H1.0 (H1-0) from Bos taurus (Bovine).